Reading from the N-terminus, the 505-residue chain is Buccalin (505 aa).

The N-terminal stretch at 1-25 is a signal peptide; the sequence is MAHHRGHRHILLYVSLALSLGLALA. Residues 26-62 constitute a propeptide that is removed on maturation; the sequence is EDATDPSDDTGSFDDVEAVSEEADLDPYSMSQELNKR. A Valine amide modification is found at V74. Residues L88 and L102 each carry the leucine amide modification. Q106 is modified (pyrrolidone carboxylic acid). I116 carries the post-translational modification Isoleucine amide. L129, L143, L157, L171, L185, L199, L213, L227, L241, L254, L267, L281, L294, L307, L321, and L335 each carry leucine amide. E349 is modified (glutamic acid 1-amide). Leucine amide is present on residues L363, L377, L391, L405, L419, and L433. Residues I447 and I461 each carry the isoleucine amide modification. Q465 carries the pyrrolidone carboxylic acid modification. The disordered stretch occupies residues 472-505; that stretch reads SGRLGKRSSSEQEEEDVRQVEKRSTTEEQSSKSL. A Leucine amide modification is found at L475. The segment covering 488 to 505 has biased composition (basic and acidic residues); the sequence is VRQVEKRSTTEEQSSKSL. A propeptide spanning residues 495–505 is cleaved from the precursor; that stretch reads STTEEQSSKSL.

As to expression, cholinergic motor neuron B15 innervating buccal muscles in Aplysia.

Its subcellular location is the secreted. In terms of biological role, modulatory neuropeptide, acting presynaptically on nerve terminals to inhibit acetylcholine release. The polypeptide is Buccalin (Aplysia californica (California sea hare)).